We begin with the raw amino-acid sequence, 736 residues long: MPKYKTSEQVLSLMKDRTRVRNIGIIAHVDHGKTTTSDQLLAASGIISPKVAGEALALDYLSVEQQRGITVKAANVSLYHEVEGKGYVINLIDTPGHVDFSGRVTRSLRVLDGSIVVVDSVEGVMTQTETVLRQSLEERVRPILFVNKVDRLVKELKLGPQEMMQKLMDIIKEVNNLINIYAEPELKEKWAINPTLGNVVFGSAKDRWGFSIPMAQKKGINMKHVIDAYSTTDKTKINELASQVPINEALLDAVIKFVPNPVDAQKYRIPKIWKGDLDNELAKSMLNADPNGPVVMMITDMKVDPHAGLVATGRVFSGTIRPGSEVWLVNAKAPQKVLQVSIYMGQFRELADEIPAGNIAAVLGLERARSGETLIDIRYKDLQGSFEKLHYVSEPVVTIAVEPKNPKDLTKMIDALRKLSIEDPNLVVKINEETGEYLLSGMGFLHVEVSLQLLKDNYGVDVVTTPPIVVYRESVRNKSQVFEGKSPNKHNKFYISVEPLNDKTIELISNGTIKEDMDSKEMAKILRDQADWDYDEAKKIIAIDENVNVLIDATSGVQHLREIMDTMLQGYRLAMREGPLAHEPIRGVKVILHDATIHEDPAHRGPAQIYPAVRNAIFAAMLMSKPTLLEPLQKLDIRVPMEFVGNVTAVLSRKRGKVLNMTQSGSVARILAEIPVSESYELASDLRGSTGGRAFWGTEFSKWAPVPDSILTDVILKIRERKGLPKELPKVEDFLS.

The tr-type G domain occupies 18-262 (TRVRNIGIIA…AVIKFVPNPV (245 aa)). Residues 27–34 (AHVDHGKT), 93–97 (DTPGH), and 147–150 (NKVD) contribute to the GTP site. At H603 the chain carries Diphthamide.

The protein belongs to the TRAFAC class translation factor GTPase superfamily. Classic translation factor GTPase family. EF-G/EF-2 subfamily.

It localises to the cytoplasm. Catalyzes the GTP-dependent ribosomal translocation step during translation elongation. During this step, the ribosome changes from the pre-translocational (PRE) to the post-translocational (POST) state as the newly formed A-site-bound peptidyl-tRNA and P-site-bound deacylated tRNA move to the P and E sites, respectively. Catalyzes the coordinated movement of the two tRNA molecules, the mRNA and conformational changes in the ribosome. In Metallosphaera sedula (strain ATCC 51363 / DSM 5348 / JCM 9185 / NBRC 15509 / TH2), this protein is Elongation factor 2.